Reading from the N-terminus, the 594-residue chain is Aspartate--tRNA(Asp/Asn) ligase (594 aa).

E175 serves as a coordination point for L-aspartate. The segment at Q199 to K202 is aspartate. Residue R221 coordinates L-aspartate. ATP-binding positions include R221–E223 and Q230. H450 is a binding site for L-aspartate. E485 contacts ATP. R492 contacts L-aspartate. G537–R540 is an ATP binding site.

It belongs to the class-II aminoacyl-tRNA synthetase family. Type 1 subfamily. Homodimer.

The protein localises to the cytoplasm. The catalysed reaction is tRNA(Asx) + L-aspartate + ATP = L-aspartyl-tRNA(Asx) + AMP + diphosphate. In terms of biological role, aspartyl-tRNA synthetase with relaxed tRNA specificity since it is able to aspartylate not only its cognate tRNA(Asp) but also tRNA(Asn). Reaction proceeds in two steps: L-aspartate is first activated by ATP to form Asp-AMP and then transferred to the acceptor end of tRNA(Asp/Asn). This chain is Aspartate--tRNA(Asp/Asn) ligase, found in Herpetosiphon aurantiacus (strain ATCC 23779 / DSM 785 / 114-95).